The primary structure comprises 349 residues: D-arabinose 1-dehydrogenase (NADP(+)) (349 aa).

Zn(2+)-binding residues include cysteine 46, histidine 70, aspartate 99, cysteine 102, cysteine 105, cysteine 113, and aspartate 155.

This sequence belongs to the zinc-containing alcohol dehydrogenase family. In terms of assembly, homotetramer. Dimer of dimers. Zn(2+) is required as a cofactor.

It catalyses the reaction D-arabinose + NADP(+) = D-arabinono-1,4-lactone + NADPH + H(+). In terms of biological role, participates in a pentose oxidation pathway that converts D-arabinose to 2-oxoglutarate. Catalyzes the NADP-dependent conversion of D-arabinose to D-arabinono-1,4-lactone. In vitro, can also use L-fucose, L-galactose and D-ribose. Shows highest activity with L-fucose, in combinaison with NAD, and lower activity toward L-galactose and D-ribose. When acting on its physiological substrate, D-arabinose, shows a clear preference for NADP over NAD. The sequence is that of D-arabinose 1-dehydrogenase (NADP(+)) from Saccharolobus solfataricus (strain ATCC 35092 / DSM 1617 / JCM 11322 / P2) (Sulfolobus solfataricus).